A 498-amino-acid chain; its full sequence is Ammonium transporter 3 member 1 (498 aa).

Transmembrane regions (helical) follow at residues 33 to 53 (ISAT…YGSI), 58 to 78 (WAVN…LCWV), 143 to 163 (MVYF…GSLL), 171 to 191 (WMLF…FSLW), 206 to 226 (GGYV…YWVG), 241 to 261 (VLLM…FNGG), 276 to 296 (NTNI…VIFF), 301 to 321 (VIGA…GAGL), 325 to 345 (WAAI…MMVV), 369 to 389 (GFLG…SLFL), and 412 to 432 (VAGA…VCLA). Positions 478–498 (DNNDTHHNNNKAAPSGVTQNV) are disordered. Residues 487-498 (NKAAPSGVTQNV) show a composition bias toward polar residues.

The protein belongs to the ammonia transporter channel (TC 1.A.11.2) family. In terms of tissue distribution, expressed in root.

It is found in the membrane. Functionally, involved in ammonium transport. This Oryza sativa subsp. japonica (Rice) protein is Ammonium transporter 3 member 1 (AMT3-1).